A 231-amino-acid polypeptide reads, in one-letter code: Phosphatidylserine decarboxylase proenzyme (231 aa).

Ser188 serves as the catalytic Schiff-base intermediate with substrate; via pyruvic acid. Ser188 carries the post-translational modification Pyruvic acid (Ser); by autocatalysis.

Belongs to the phosphatidylserine decarboxylase family. PSD-A subfamily. As to quaternary structure, heterodimer of a large membrane-associated beta subunit and a small pyruvoyl-containing alpha subunit. It depends on pyruvate as a cofactor. Is synthesized initially as an inactive proenzyme. Formation of the active enzyme involves a self-maturation process in which the active site pyruvoyl group is generated from an internal serine residue via an autocatalytic post-translational modification. Two non-identical subunits are generated from the proenzyme in this reaction, and the pyruvate is formed at the N-terminus of the alpha chain, which is derived from the carboxyl end of the proenzyme. The post-translation cleavage follows an unusual pathway, termed non-hydrolytic serinolysis, in which the side chain hydroxyl group of the serine supplies its oxygen atom to form the C-terminus of the beta chain, while the remainder of the serine residue undergoes an oxidative deamination to produce ammonia and the pyruvoyl prosthetic group on the alpha chain.

The protein resides in the cell membrane. It carries out the reaction a 1,2-diacyl-sn-glycero-3-phospho-L-serine + H(+) = a 1,2-diacyl-sn-glycero-3-phosphoethanolamine + CO2. The protein operates within phospholipid metabolism; phosphatidylethanolamine biosynthesis; phosphatidylethanolamine from CDP-diacylglycerol: step 2/2. Functionally, catalyzes the formation of phosphatidylethanolamine (PtdEtn) from phosphatidylserine (PtdSer). In Rickettsia peacockii (strain Rustic), this protein is Phosphatidylserine decarboxylase proenzyme.